Here is a 470-residue protein sequence, read N- to C-terminus: Cell division protein FtsP (470 aa).

The tat-type signal signal peptide spans 1 to 27 (MSFSRRQFLQASGIALCAGAIPLRANA). A Plastocyanin-like domain is found at 222–287 (VEVSRGWVRL…RREILVDMTN (66 aa)).

This sequence belongs to the FtsP family. In terms of processing, predicted to be exported by the Tat system. The position of the signal peptide cleavage has not been experimentally proven.

It is found in the periplasm. Cell division protein that is required for growth during stress conditions. May be involved in protecting or stabilizing the divisomal assembly under conditions of stress. The protein is Cell division protein FtsP of Salmonella typhi.